The sequence spans 343 residues: MESGRLIFSTAGSGAGQMLFLDCGAGGGGVGGGAMFHRGARPVLGMEEGGRGVKRPFFTTPDELLEEEYYDEQLPEKKRRLTPEQVHLLERSFEEENKLEPERKTELARKLGLQPRQVAVWFQNRRARWKTKQLERDFDRLKASFDALRADHDALLQDNHRLHSQVMSLTEKLQEKETTTEGSAGAAVDVPGLPAAADVKVAVPDAEEPALEEAAAAFEEQQEQQVKAEDRLSTGSGGSAVVDTDAQLVVGCGRQHLAAVDSSVESYFPGGDEYHDCVMGPMDHAAGGIQSEEDDGAGSDEGCSYYADDAGVLFADHGHHHHHQHADDDEEDGQQISCWWMWN.

Residues 74-133 (LPEKKRRLTPEQVHLLERSFEEENKLEPERKTELARKLGLQPRQVAVWFQNRRARWKTKQ) constitute a DNA-binding region (homeobox). The interval 132-176 (KQLERDFDRLKASFDALRADHDALLQDNHRLHSQVMSLTEKLQEK) is leucine-zipper. The tract at residues 218 to 239 (FEEQQEQQVKAEDRLSTGSGGS) is disordered.

The protein belongs to the HD-ZIP homeobox family. Class I subfamily. Expressed in seedlings, stems, leaf sheaths and blades and panicles.

Its subcellular location is the nucleus. Functionally, probable transcription factor. This chain is Homeobox-leucine zipper protein HOX16 (HOX16), found in Oryza sativa subsp. japonica (Rice).